We begin with the raw amino-acid sequence, 74 residues long: Auswaprin-a (74 aa).

A signal peptide spans 1-24 (MSSGGLLLLLGLLTLWGVLTPVSS). Residues 27 to 71 (RPKKPGLCPPRPQKPCVKECKNDWSCSGQQKCCNYGCIDECRDPI) form the WAP domain. 4 disulfides stabilise this stretch: Cys34–Cys59, Cys42–Cys63, Cys46–Cys58, and Cys52–Cys67.

This sequence belongs to the venom waprin family. As to expression, expressed by the venom gland.

It is found in the secreted. Damages membranes of susceptible bacteria. Has no hemolytic activity. Not toxic to mice. Does not inhibit the proteinases elastase and cathepsin G. The polypeptide is Auswaprin-a (Pseudechis australis (Mulga snake)).